The primary structure comprises 200 residues: Ribonuclease HII (200 aa).

One can recognise an RNase H type-2 domain in the interval 11 to 200 (QSIAGVDEVG…VRRALISLTG (190 aa)). A divalent metal cation is bound by residues D17, E18, and D109.

The protein belongs to the RNase HII family. Mn(2+) is required as a cofactor. The cofactor is Mg(2+).

It is found in the cytoplasm. It catalyses the reaction Endonucleolytic cleavage to 5'-phosphomonoester.. Functionally, endonuclease that specifically degrades the RNA of RNA-DNA hybrids. The sequence is that of Ribonuclease HII from Hamiltonella defensa subsp. Acyrthosiphon pisum (strain 5AT).